Here is a 465-residue protein sequence, read N- to C-terminus: Sensor histidine kinase ZraS (465 aa).

Over 1–14 the chain is Cytoplasmic; sequence MSFIRLHKDAAAMW. The helical transmembrane segment at 15-35 threads the bilayer; it reads LSRLLPAAIFILVGLFSIMVI. Residues 36-203 are Periplasmic-facing; that stretch reads RDYGRESAAA…ATQAREWRNT (168 aa). The chain crosses the membrane as a helical span at residues 204–224; the sequence is LIVLSALAAVLLATLLAFFWY. Residues 225–465 are Cytoplasmic-facing; it reads QRYQRSHREL…WLPVIARQQD (241 aa). One can recognise a Histidine kinase domain in the interval 253 to 461; it reads GVAHEIRNPL…VFTIWLPVIA (209 aa). His-256 bears the Phosphohistidine; by autocatalysis mark.

In terms of processing, autophosphorylated.

It is found in the cell inner membrane. It carries out the reaction ATP + protein L-histidine = ADP + protein N-phospho-L-histidine.. Activity of the ZraS/ZraR two-component system is repressed by the zinc-bound form of ZraP, which probably interacts with the periplasmic region of ZraS. In terms of biological role, part of the Zra signaling pathway, an envelope stress response (ESR) system composed of the periplasmic accessory protein ZraP, the histidine kinase ZraS and the transcriptional regulator ZraR. The ZraPSR system contributes to antibiotic resistance and is important for membrane integrity in the presence of membrane-targeting biocides. ZraS is a member of the two-component regulatory system ZraS/ZraR. Functions as a membrane-associated sensor kinase that phosphorylates ZraR in response to high concentrations of Zn(2+) or Pb(2+) in the medium. This chain is Sensor histidine kinase ZraS (zraS), found in Salmonella typhi.